We begin with the raw amino-acid sequence, 502 residues long: Cytochrome P450 monooxygenase pyr9 (502 aa).

The chain crosses the membrane as a helical span at residues 5 to 25 (EDASIGTVWVTCLLAVGLYFI). N-linked (GlcNAc...) asparagine glycosylation is found at Asn-205, Asn-291, and Asn-372. Heme is bound at residue Cys-437.

Belongs to the cytochrome P450 family. It depends on heme as a cofactor.

The protein localises to the membrane. It functions in the pathway secondary metabolite biosynthesis; terpenoid biosynthesis. Cytochrome P450 monooxygenase; part of the gene cluster that mediates the biosynthesis of pyripyropene A, a specific human acyl-coenzyme A:cholesterol acyltransferase 2 inhibitor. The first step of the pathway is the synthesis of nicotinyl-CoA from nicotinic acid by the nicotinic acid-CoA ligase pyr1. Nicotinyl-CoA is then a substrate of polyketide synthase pyr2 to produce 4-hydroxy-6-(3-pyridinyl)-2H-pyran-2-one (HPPO) which is further prenylated by the polyprenyl transferase pyr6 to yield farnesyl-HPPO. The next steps consist of an epoxidation of farnesyl-HPPO to epoxyfarnesyl-HPPO by FAD-dependent monooxygenase pyr5 and a cyclization of the terpenoid portion by the terpene cyclase pyr4 to yield deacetyl-pyripyropene E. The 2 cytochrome P450 monooxygenases pyr3 and pyr9, and the 2 acetyltransferases pyr7 and pyr8 are involved in the conversion of deacetyl-pyripyropene E into pyripyropene A through several cycles of oxidation and acetylation steps. Pyr7 acetylates deacetyl-pyripyropene E to pyripyropene E which is oxidized to 11-deacetyl-pyripyropene O by pyr3, which is in turn acetylated into pyripyropene O by pyr8. Pyripyropene O is then oxidized to deacetyl-pyripyropene A by pyr9. Deacetyl-pyripyropene A is finally acetylated to pyripyropene A by pyr8. In Aspergillus fumigatus (strain ATCC MYA-4609 / CBS 101355 / FGSC A1100 / Af293) (Neosartorya fumigata), this protein is Cytochrome P450 monooxygenase pyr9.